We begin with the raw amino-acid sequence, 247 residues long: MHLLALHLLLFLLGSRAKAGEIIGGTECKPHSRPYMAYLEIATSKNYLSTCSGFLIRRNFVLTAAHCSGRSITVLLGAHNKTAKEDTWQKIEVEKQFPHPKYDDYSVLHDIMLLKLKEKAKLTLAVGTLPLPAKFSFIPPGRVCRAVGWGKTNVNEPTSDTLQEVKMRLLEAEGCKHFTNFYHSSQLCVGNPKKMQNVYKGDSGGPLLCAGIAQGIASYVRRNARPPAVFTRISHYRPWINKILREN.

Positions 1-19 (MHLLALHLLLFLLGSRAKA) are cleaved as a signal peptide. Residues 20 to 21 (GE) constitute a propeptide, activation peptide. The region spanning 22–245 (IIGGTECKPH…YRPWINKILR (224 aa)) is the Peptidase S1 domain. Residues cysteine 51 and cysteine 67 are joined by a disulfide bond. Catalysis depends on histidine 66, which acts as the Charge relay system. Residue asparagine 80 is glycosylated (N-linked (GlcNAc...) asparagine). Aspartate 110 functions as the Charge relay system in the catalytic mechanism. 2 disulfides stabilise this stretch: cysteine 144/cysteine 209 and cysteine 175/cysteine 188. The active-site Charge relay system is serine 203.

The protein belongs to the peptidase S1 family. Granzyme subfamily.

In Meriones unguiculatus (Mongolian jird), this protein is Mast cell protease 2.